We begin with the raw amino-acid sequence, 144 residues long: Large ribosomal subunit protein uL11 (144 aa).

Belongs to the universal ribosomal protein uL11 family. Part of the ribosomal stalk of the 50S ribosomal subunit. Interacts with L10 and the large rRNA to form the base of the stalk. L10 forms an elongated spine to which L12 dimers bind in a sequential fashion forming a multimeric L10(L12)X complex. Post-translationally, one or more lysine residues are methylated.

Its function is as follows. Forms part of the ribosomal stalk which helps the ribosome interact with GTP-bound translation factors. The sequence is that of Large ribosomal subunit protein uL11 from Acidiphilium cryptum (strain JF-5).